The primary structure comprises 525 residues: Neutrophil cytosol factor 2 (525 aa).

TPR repeat units follow at residues 37–70, 71–104, and 121–154; these read SRIC…DKHS, AVAY…LRGN, and CEVL…KSEP. At T233 the chain carries Phosphothreonine. Residues 240–299 form the SH3 1 domain; it reads LEGEAHRVLFGFVPETPEELQVMPGNIVFVLKKGSDNWATVMFNGQKGLVPCNYLEPVEL. The segment at 304–343 is disordered; that stretch reads QSQPQEDTSPESDIPPPPNSSPPGRLQLSPGHKQKEPKEL. Phosphoserine occurs at positions 324 and 398. Positions 350–428 constitute a PB1 domain; sequence PYMLKVHYKY…YCLTLWCEHT (79 aa). Residues 437–457 form a disordered region; sequence EPIQRENSDASKQTTEPQPKE. The 60-residue stretch at 456-515 folds into the SH3 2 domain; the sequence is KEGTQVVAIFSYEAAQPEDLEFVEGDVILVLSHVNEEWLEGECKGKVGIFPKAFVEGCAA.

It belongs to the NCF2/NOXA1 family. As to quaternary structure, component of the phagocyte NADPH oxidase complex composed of an obligatory core heterodimer formed by the membrane proteins CYBA and CYBB and the cytosolic regulatory subunits NCF1/p47-phox, NCF2/p67-phox, NCF4/p40-phox and the small GTPase RAC1 or RAC2. Part of a cytosolic complex composed at least by NCF1, NCF2 and NCF4. Interacts with NCF4. Interacts (via the C-terminal SH3 domain) with NCF1 (via C-terminus). Interacts with SYTL1 and RAC1. May interact with NOXO1. Interacts with S100A8 and calprotectin (S100A8/9). Interacts with GBP7 (via GB1/RHD3-type G domain). Interacts with CYBB; the interaction is enhanced in the presence of GBP7.

It localises to the cytoplasm. In terms of biological role, NCF2, NCF1, and a membrane bound cytochrome b558 are required for activation of the latent NADPH oxidase (necessary for superoxide production). Subunit of the phagocyte NADPH oxidase complex that mediates the transfer of electrons from cytosolic NADPH to O2 to produce the superoxide anion (O2(-)). In the activated complex, electrons are first transferred from NADPH to flavin adenine dinucleotide (FAD) and subsequently transferred via two heme molecules to molecular oxygen, producing superoxide through an outer-sphere reaction. Activation of the NADPH oxidase complex is initiated by the assembly of cytosolic subunits of the NADPH oxidase complex with the core NADPH oxidase complex to form a complex at the plasma membrane or phagosomal membrane. This activation process is initiated by phosphorylation dependent binding of the cytosolic NCF1/p47-phox subunit to the C-terminus of CYBA/p22-phox. The polypeptide is Neutrophil cytosol factor 2 (Mus musculus (Mouse)).